Reading from the N-terminus, the 197-residue chain is Large ribosomal subunit protein uL10 (197 aa).

Positions 162–197 (READGETAETPAQETASDDSKSTKAEASDASTTENK) are disordered. Positions 179 to 188 (DDSKSTKAEA) are enriched in basic and acidic residues.

The protein belongs to the universal ribosomal protein uL10 family. Part of the ribosomal stalk of the 50S ribosomal subunit. The N-terminus interacts with L11 and the large rRNA to form the base of the stalk. The C-terminus forms an elongated spine to which L12 dimers bind in a sequential fashion forming a multimeric L10(L12)X complex.

Forms part of the ribosomal stalk, playing a central role in the interaction of the ribosome with GTP-bound translation factors. The polypeptide is Large ribosomal subunit protein uL10 (Oenococcus oeni (strain ATCC BAA-331 / PSU-1)).